The chain runs to 160 residues: Protein-export protein SecB (160 aa).

Belongs to the SecB family. In terms of assembly, homotetramer, a dimer of dimers. One homotetramer interacts with 1 SecA dimer.

The protein resides in the cytoplasm. Its function is as follows. One of the proteins required for the normal export of preproteins out of the cell cytoplasm. It is a molecular chaperone that binds to a subset of precursor proteins, maintaining them in a translocation-competent state. It also specifically binds to its receptor SecA. This Orientia tsutsugamushi (strain Boryong) (Rickettsia tsutsugamushi) protein is Protein-export protein SecB.